A 182-amino-acid polypeptide reads, in one-letter code: Core-binding factor subunit beta (182 aa).

At Ala-173 the chain carries Phosphoserine.

This sequence belongs to the CBF-beta family. Heterodimer with RUNX1, RUNX2 and RUNX3. Interacts with COPRS. Found in a complex with PRMT5 and RUNX1. As to quaternary structure, (Microbial infection) Interacts with HIV-1 Vif; forming an active cullin-5-RING E3 ubiquitin-protein ligase complex (ECS complex).

The protein localises to the nucleus. In terms of biological role, forms the heterodimeric complex core-binding factor (CBF) with RUNX family proteins (RUNX1, RUNX2, and RUNX3). RUNX members modulate the transcription of their target genes through recognizing the core consensus binding sequence 5'-TGTGGT-3', or very rarely, 5'-TGCGGT-3', within their regulatory regions via their runt domain, while CBFB is a non-DNA-binding regulatory subunit that allosterically enhances the sequence-specific DNA-binding capacity of RUNX. The heterodimers bind to the core site of a number of enhancers and promoters, including murine leukemia virus, polyomavirus enhancer, T-cell receptor enhancers, LCK, IL3 and GM-CSF promoters. CBF complexes repress ZBTB7B transcription factor during cytotoxic (CD8+) T cell development. They bind to RUNX-binding sequence within the ZBTB7B locus acting as transcriptional silencer and allowing for cytotoxic T cell differentiation. Functionally, (Microbial infection) Following infection, hijacked by the HIV-1 Vif protein, leading to the formation a cullin-5-RING E3 ubiquitin-protein ligase complex (ECS complex) that catalyzes ubiquitination and degradation of APOBEC3F and APOBEC3G. The complex can also ubiquitinate APOBEC3H to some extent. Association with HIV-1 Vif protein also inhibits the transcription coactivator activity of CBFB/CBF-beta. This chain is Core-binding factor subunit beta (CBFB), found in Homo sapiens (Human).